A 576-amino-acid polypeptide reads, in one-letter code: Kinetochore-associated protein DSN1 (576 aa).

Over residues 1 to 11 (MSLEPTQTVSG) the composition is skewed to polar residues. 4 disordered regions span residues 1 to 22 (MSLE…RTHK), 35 to 64 (LESD…NKQS), 185 to 205 (YSQP…ISSS), and 227 to 246 (QPHY…SQRG). Positions 235–246 (RERKKSIGSQRG) are enriched in basic residues. Ser250 is subject to Phosphoserine. The tract at residues 412-437 (RSRRKFSERRKALPKEPKKLLPNSKN) is disordered. A compositionally biased stretch (basic and acidic residues) spans 420-430 (RRKALPKEPKK).

Component of the MIND kinetochore complex, which is composed of at least MTW1, NNF1, NSL1 and DSN1. Interacts with NSL1.

The protein localises to the nucleus. It localises to the chromosome. It is found in the centromere. The protein resides in the kinetochore. Its function is as follows. Acts as an essential component of the kinetochore MIND complex, which is required for the spindle checkpoint and kinetochore integrity. MIND plays a role in establishing a bipolar spindle-kinetochore interaction by joining kinetochore subunits contacting DNA to those contacting microtubules. The sequence is that of Kinetochore-associated protein DSN1 (DSN1) from Saccharomyces cerevisiae (strain ATCC 204508 / S288c) (Baker's yeast).